A 181-amino-acid polypeptide reads, in one-letter code: Caveolin-1 (181 aa).

Topologically, residues 1–107 (MTGGLRDGEK…TKYWCYRLLT (107 aa)) are cytoplasmic. Positions 108–128 (ALVGIPLALIWGIFFAILSFI) form an intramembrane region, helical. The Cytoplasmic segment spans residues 129–181 (HIWAVVPCVKSYLIEIHCISRVYSICVHTFCDPLFEAMGKCLGGVRIRTSKEV). Residues Cys-136, Cys-146, and Cys-159 are each lipidated (S-palmitoyl cysteine).

This sequence belongs to the caveolin family. Homooligomer.

It localises to the golgi apparatus membrane. Its subcellular location is the cell membrane. The protein resides in the membrane. The protein localises to the caveola. It is found in the membrane raft. Functionally, may act as a positive regulator of T-cell coactivation. May act as a scaffolding protein within caveolar membranes. Interacts directly with G-protein alpha subunits and can functionally regulate their activity. This chain is Caveolin-1 (cav1), found in Takifugu rubripes (Japanese pufferfish).